The following is a 1358-amino-acid chain: MSYSYAEKKRIRKEFGVLPHILDVPYLLSIQTESYKKFLTADAAKGRLHSGLEIVLKQSFPVESKNGQYELHYVDYQIGEPTFDETECQVRGATYDAPLNVKLRLVVYNKDALPNEKIVEDIREEYVYMGDIPLMTTNGTFIINGTERVVVSQLHRSPGVFFSKDDSEEGAFSARIIPYRGSWLDFEFDSKGIIWARIDRKRKFCATVILKALGYTQEQILENFSESKTITFNSKGFALRLDNLSNMKGELLKFDIVDAQDNVIVKKNKKLTSRDVKKIKDAGVDSVAIDFDLVSTLRVAKDIVNEATGEVIAYANDDVTESLLESCVEVGMLELEVIDFITTERGRYISDTLKYDLTRNTDEALVEIYKVLRPGDPPAAASVKALFEGLFFIESRYSLSDIGRMKLNARLGSDKVSKDIYTLENSDIVGVIEELINIRDGKGKVDDIDHLGNRRVRSVGEMVENQFRIGLYRVEKGIRESMSLVHKDKLMPKDIVNSKPITAAIKEFFTSGALSQFMDQDNPLSEVTHKRRISALGPGGLSRDRAGFEVRDVHATHYGRLCPIETPEGPNIGLINSLASYARVNDYGFLEAPYRKVVDGKVTDEIEYLSAIDEDNYVIAQASTKLDENNHFVEDLIQCRSGGEAIFTESSRVQYMDVSAKQMVSAAAALIPFLEHDDANRVLMGANMQRQAVPTLKSEKPLVGTGMEKIVARDSGNCIIARNAGEVAEVDSNRIVIKVDTEKSQTSNLVDIYSLTKFKRSNKNTCINQRPIVNVGDKVEAGDILADGFATDFGELSLGHNLMVAFMPWNGYNFEDSILLSERIVKDDKYTSIHIEEFTCVARDTKLGPEEITADIPNVSESSLAKLDESGIVHIGANVEAGDILVAKITPKAEQQLTPEERLLRAIFNEKASNVADSSLRMPSGTSGTVINVQVFENDKGGKSKRALKIEKELIDKARKDFDEEFAVIESVVKSSIEQEVVGAKIQKAKGLKKGAILTKEFLATLPFSKWLEISFEDEKLEEKVQNAREYYEEAKIAIDAKFEAKKKSITQSNELSPGVLKTVKVFVAIKKRIQPGDKMAGRHGNKGVVSRVLPVEDMPYMEDGTPVDVCLNPLGIPSRMNIGQILEAHLGLASYGLGKKIEKTLEKTRKAAELRKTLEEVYNSVGDKKVNLEALNDEEILTLCDNLKGGVPIATPVFDGAKEEDIKSLLKIGGFATNGQMKLFDGRTGKPFDRHVTVGYMYMLKLDHLVDDKMHARSTGSYSLVTQQPLGGKAQFGGQRFGEMEVWALQAYGAAYTLREMLTVKSDDIAGRSKMYKNIVDGKLTMNVDVPESFNVLRNEVRALGIDMDFDYSSEEE.

It belongs to the RNA polymerase beta chain family. As to quaternary structure, the RNAP catalytic core consists of 2 alpha, 1 beta, 1 beta' and 1 omega subunit. When a sigma factor is associated with the core the holoenzyme is formed, which can initiate transcription.

The enzyme catalyses RNA(n) + a ribonucleoside 5'-triphosphate = RNA(n+1) + diphosphate. DNA-dependent RNA polymerase catalyzes the transcription of DNA into RNA using the four ribonucleoside triphosphates as substrates. This chain is DNA-directed RNA polymerase subunit beta, found in Francisella tularensis subsp. tularensis (strain FSC 198).